A 123-amino-acid chain; its full sequence is Small ribosomal subunit protein uS12 (123 aa).

Aspartate 89 carries the post-translational modification 3-methylthioaspartic acid. Residues 101 to 123 are disordered; it reads SLDTSGVKDRKQGRSKYGAKRPK. The span at 113–123 shows a compositional bias: basic residues; that stretch reads GRSKYGAKRPK.

It belongs to the universal ribosomal protein uS12 family. As to quaternary structure, part of the 30S ribosomal subunit. Contacts proteins S8 and S17. May interact with IF1 in the 30S initiation complex.

With S4 and S5 plays an important role in translational accuracy. Its function is as follows. Interacts with and stabilizes bases of the 16S rRNA that are involved in tRNA selection in the A site and with the mRNA backbone. Located at the interface of the 30S and 50S subunits, it traverses the body of the 30S subunit contacting proteins on the other side and probably holding the rRNA structure together. The combined cluster of proteins S8, S12 and S17 appears to hold together the shoulder and platform of the 30S subunit. The polypeptide is Small ribosomal subunit protein uS12 (Azotobacter vinelandii (strain DJ / ATCC BAA-1303)).